The primary structure comprises 219 residues: Protein-L-isoaspartate O-methyltransferase (219 aa).

Serine 66 is an active-site residue.

Belongs to the methyltransferase superfamily. L-isoaspartyl/D-aspartyl protein methyltransferase family.

The protein resides in the cytoplasm. The enzyme catalyses [protein]-L-isoaspartate + S-adenosyl-L-methionine = [protein]-L-isoaspartate alpha-methyl ester + S-adenosyl-L-homocysteine. Its function is as follows. Catalyzes the methyl esterification of L-isoaspartyl residues in peptides and proteins that result from spontaneous decomposition of normal L-aspartyl and L-asparaginyl residues. It plays a role in the repair and/or degradation of damaged proteins. The sequence is that of Protein-L-isoaspartate O-methyltransferase from Xanthobacter autotrophicus (strain ATCC BAA-1158 / Py2).